A 212-amino-acid polypeptide reads, in one-letter code: N-acetyltransferase 9-like protein (212 aa).

Residues 34–201 (EEIREQTASE…INLLNLKNND (168 aa)) enclose the N-acetyltransferase domain.

The protein belongs to the acetyltransferase family. GNAT subfamily.

The polypeptide is N-acetyltransferase 9-like protein (nat9) (Dictyostelium discoideum (Social amoeba)).